The chain runs to 880 residues: Leucine--tRNA ligase (880 aa).

Residues 46–56 carry the 'HIGH' region motif; that stretch reads PYPSGALHMGH. The 'KMSKS' region signature appears at 638 to 642; the sequence is KMSKS. Lysine 641 contacts ATP.

It belongs to the class-I aminoacyl-tRNA synthetase family.

It is found in the cytoplasm. The catalysed reaction is tRNA(Leu) + L-leucine + ATP = L-leucyl-tRNA(Leu) + AMP + diphosphate. This Xanthomonas oryzae pv. oryzae (strain MAFF 311018) protein is Leucine--tRNA ligase.